A 321-amino-acid chain; its full sequence is Malate dehydrogenase (321 aa).

NAD(+)-binding positions include 10-15 and Asp-34; that span reads GAGQIG. Substrate contacts are provided by Arg-83 and Arg-89. Residues Asn-96 and 119-121 each bind NAD(+); that span reads VTN. Asn-121 and Arg-152 together coordinate substrate. His-176 acts as the Proton acceptor in catalysis.

Belongs to the LDH/MDH superfamily. MDH type 3 family.

The catalysed reaction is (S)-malate + NAD(+) = oxaloacetate + NADH + H(+). Catalyzes the reversible oxidation of malate to oxaloacetate. The chain is Malate dehydrogenase from Azorhizobium caulinodans (strain ATCC 43989 / DSM 5975 / JCM 20966 / LMG 6465 / NBRC 14845 / NCIMB 13405 / ORS 571).